Reading from the N-terminus, the 341-residue chain is Ectoine-binding periplasmic protein TeaA (341 aa).

Positions 1 to 25 are cleaved as a signal peptide; that stretch reads MKAYKLLTTASIGALMLGMSTAAYS. Residues E34, R169, N209, W213, and F234 each coordinate L-ectoine.

Belongs to the bacterial solute-binding protein 7 family. As to quaternary structure, monomer. The complex comprises the extracytoplasmic solute receptor protein TeaA, and the two transmembrane proteins TeaB and TeaC.

Its subcellular location is the periplasm. Part of the tripartite ATP-independent periplasmic (TRAP) transport system TeaABC involved in the uptake of ectoine and hydroxyectoine in response to osmotic upshock. Probably functions as a recovery system for synthesized ectoine that leaks out of the cell. Binds ectoine with high affinity. Affinity for hydroxyectoine is approximately 20-fold lower. This Halomonas elongata (strain ATCC 33173 / DSM 2581 / NBRC 15536 / NCIMB 2198 / 1H9) protein is Ectoine-binding periplasmic protein TeaA (teaA).